Here is a 300-residue protein sequence, read N- to C-terminus: 4-hydroxy-tetrahydrodipicolinate synthase (300 aa).

Position 49 (threonine 49) interacts with pyruvate. Catalysis depends on tyrosine 137, which acts as the Proton donor/acceptor. Lysine 166 serves as the catalytic Schiff-base intermediate with substrate. Isoleucine 208 contacts pyruvate.

The protein belongs to the DapA family. As to quaternary structure, homotetramer; dimer of dimers.

Its subcellular location is the cytoplasm. It catalyses the reaction L-aspartate 4-semialdehyde + pyruvate = (2S,4S)-4-hydroxy-2,3,4,5-tetrahydrodipicolinate + H2O + H(+). It participates in amino-acid biosynthesis; L-lysine biosynthesis via DAP pathway; (S)-tetrahydrodipicolinate from L-aspartate: step 3/4. In terms of biological role, catalyzes the condensation of (S)-aspartate-beta-semialdehyde [(S)-ASA] and pyruvate to 4-hydroxy-tetrahydrodipicolinate (HTPA). This chain is 4-hydroxy-tetrahydrodipicolinate synthase, found in Methanopyrus kandleri (strain AV19 / DSM 6324 / JCM 9639 / NBRC 100938).